The sequence spans 269 residues: Flagellar brake protein YcgR (269 aa).

Residues methionine 1–tyrosine 42 are disordered. Residues alanine 19–threonine 33 show a composition bias toward acidic residues. Residues glutamine 149–phenylalanine 261 form the PilZ domain.

Belongs to the YcgR family. As to quaternary structure, monomer. Interacts with the flagellar basal bodies.

It localises to the bacterial flagellum basal body. Acts as a flagellar brake, regulating swimming and swarming in a bis-(3'-5') cyclic diguanylic acid (c-di-GMP)-dependent manner. Binds 1 c-di-GMP dimer per subunit. Increasing levels of c-di-GMP lead to decreased motility. This Cupriavidus taiwanensis (strain DSM 17343 / BCRC 17206 / CCUG 44338 / CIP 107171 / LMG 19424 / R1) (Ralstonia taiwanensis (strain LMG 19424)) protein is Flagellar brake protein YcgR.